The following is a 130-amino-acid chain: Protein ApaG (130 aa).

Residues 3-127 form the ApaG domain; it reads KAETRGISVT…FSLDVPHVRR (125 aa).

The polypeptide is Protein ApaG (Methylobacterium sp. (strain 4-46)).